We begin with the raw amino-acid sequence, 126 residues long: Glycine cleavage system H protein (126 aa).

The region spanning 22–104 is the Lipoyl-binding domain; it reads VAYVGITDYA…YGEGWLIKMK (83 aa). Lysine 63 bears the N6-lipoyllysine mark.

The protein belongs to the GcvH family. The glycine cleavage system is composed of four proteins: P, T, L and H. The cofactor is (R)-lipoate.

In terms of biological role, the glycine cleavage system catalyzes the degradation of glycine. The H protein shuttles the methylamine group of glycine from the P protein to the T protein. This chain is Glycine cleavage system H protein, found in Bacteroides fragilis (strain YCH46).